We begin with the raw amino-acid sequence, 1402 residues long: Phospholipid-transporting ATPase dnf2 (1402 aa).

The next 4 helical transmembrane spans lie at 109-129 (FQNVANLFFLFLVILQSISIF), 135-155 (PGLAAVPLIVVVGITAVKDAI), 457-477 (LNFIILFSMCFVCAVVEGIAW), and 501-521 (VVTFFTGVILFQNLVPISLYI). Asp-569 functions as the 4-aspartylphosphate intermediate in the catalytic mechanism. Positions 569, 570, 571, 700, 741, 743, 746, 764, 799, 800, 879, 880, 881, 986, and 992 each coordinate ATP. Mg(2+) is bound at residue Asp-569. Residue Thr-571 participates in Mg(2+) binding. Position 1012 (Asp-1012) interacts with Mg(2+). Residues Asn-1015 and Asp-1016 each coordinate ATP. Position 1016 (Asp-1016) interacts with Mg(2+). A run of 6 helical transmembrane segments spans residues 1066–1086 (VAEMVNNFFYKSVVWTFTLFW), 1101–1121 (YTYVMLFNLIFSSLPVIVMGV), 1151–1171 (IFIGYMLDGFYQSVICFFFSF), 1193–1213 (LGVYVAAPTIMVVDTYVILNQ), 1218–1238 (VFSIGLWALSCLTFWFWTGVY), and 1260–1280 (FWAVLCGTIVSCLFPKFLFMT). An a 1,2-diacyl-sn-glycero-3-phospho-L-serine-binding site is contributed by Lys-1275.

This sequence belongs to the cation transport ATPase (P-type) (TC 3.A.3) family. Type IV subfamily. It depends on Mg(2+) as a cofactor.

It localises to the cell membrane. The protein resides in the endoplasmic reticulum membrane. It catalyses the reaction ATP + H2O + phospholipidSide 1 = ADP + phosphate + phospholipidSide 2.. The catalysed reaction is a 1,2-diacyl-sn-glycero-3-phosphoethanolamine(out) + ATP + H2O = a 1,2-diacyl-sn-glycero-3-phosphoethanolamine(in) + ADP + phosphate + H(+). The enzyme catalyses a 1,2-diacyl-sn-glycero-3-phosphocholine(out) + ATP + H2O = a 1,2-diacyl-sn-glycero-3-phosphocholine(in) + ADP + phosphate + H(+). It carries out the reaction a beta-D-glucosyl-(1&lt;-&gt;1')-N-acylsphing-4-enine(out) + ATP + H2O = a beta-D-glucosyl-(1&lt;-&gt;1')-N-acylsphing-4-enine(in) + ADP + phosphate + H(+). It catalyses the reaction a 1,2-diacyl-sn-glycero-3-phospho-L-serine(out) + ATP + H2O = a 1,2-diacyl-sn-glycero-3-phospho-L-serine(in) + ADP + phosphate + H(+). Functionally, catalytic component of a P4-ATPase flippase complex which catalyzes the hydrolysis of ATP coupled to the transport of glucosylceramide, phosphatidylcholine, phosphatidylethanolamine, and small amounts of phosphatidylserine from the lumenal to the cytosolic leaflet of the cell membrane and ensures the maintenance of asymmetric distribution of phospholipids. The polypeptide is Phospholipid-transporting ATPase dnf2 (Schizosaccharomyces pombe (strain 972 / ATCC 24843) (Fission yeast)).